The chain runs to 443 residues: Putative F-box/FBD/LRR-repeat protein At3g49030 (443 aa).

Positions 20–68 (EDRISELPEDLLLQILSDIPTENVIATSVLSKRWRSLWKMVPNLTFDFT) constitute an F-box domain. LRR repeat units follow at residues 74 to 100 (HQTFSENLYRSLTSHEASVLESLQLNF), 152 to 179 (ILEIQDYILLDLPSPVCLKSLRELRLYE), 180 to 205 (VHFKDEASVCNLLCGCPSLEVLSVHR), 218 to 252 (VPSLQRLTIYDFCIGGGKGGYVINAPSLKYLNIVG), 272 to 297 (ISDVSHIANENILESLTSVKRLSLES), and 320 to 345 (KEREWWNLLSRMLESSPKLQILKLTG). Positions 357–408 (NWNPPKCVPECLLFHLEKFLWTGYEWQRGDEKEVATYILENARLLKKATFST) constitute an FBD domain.

The polypeptide is Putative F-box/FBD/LRR-repeat protein At3g49030 (Arabidopsis thaliana (Mouse-ear cress)).